Here is a 442-residue protein sequence, read N- to C-terminus: MKPGPPRRGTAQGQRVDTATHGPGARGLLLPPLLLLLLAGRAAGAQRWRNENFERPVDLEGSGDDDSFPDDELDDLYSGSGSGYFEQESGLETAMRFIPDIALAAPTAPAMLPTTVIQPVDTPFEELLSEHPGPEPVTSPPLVTEVTEVVEEPSQRATTISTTTSTTAATTTGAPTMATAPATAATTAPSTPAAPPATATTADIRTTGIQGLLPLPLTTAATAKATTPAVPSPPTTVTTLDTEAPTPRLVNTATSRPRALPRPVTTQEPEVAERSTLPLGTTAPGPTEVAQTPTPESLLTTTQDEPEVPVSGGPSGDFELQEETTQPDTANEVVAVEGAAAKPSPPLGTLPKGARPGLGLHDNAIDSGSSAAQLPQKSILERKEVLVAVIVGGVVGALFAAFLVTLLIYRMKKKDEGSYTLEEPKQASVTYQKPDKQEEFYA.

Disordered stretches follow at residues 1-25 (MKPG…GPGA) and 55-85 (RPVD…SGYF). The N-terminal stretch at 1 to 44 (MKPGPPRRGTAQGQRVDTATHGPGARGLLLPPLLLLLLAGRAAG) is a signal peptide. Residues 45–387 (AQRWRNENFE…SILERKEVLV (343 aa)) are Extracellular-facing. Over residues 61 to 75 (GSGDDDSFPDDELDD) the composition is skewed to acidic residues. O-linked (Xyl...) (glycosaminoglycan) serine glycosylation is found at S78, S80, S82, and S89. T107 is a glycosylation site (O-linked (GalNAc) threonine; by GALNT13). Disordered stretches follow at residues 151-175 (EEPS…TGAP), 180-199 (APAT…PATA), 225-244 (ATTP…DTEA), 252-327 (TATS…TTQP), and 339-372 (AAAK…SSAA). Residues 157–175 (ATTISTTTSTTAATTTGAP) show a composition bias toward low complexity. O-linked (GalNAc) serine; by GALNT13 glycosylation occurs at S161. O-linked (GalNAc) threonine; by GALNT13 glycosylation is found at T162, T163, T170, and T172. The span at 276–287 (TLPLGTTAPGPT) shows a compositional bias: low complexity. Over residues 289 to 303 (VAQTPTPESLLTTTQ) the composition is skewed to polar residues. O-linked (Xyl...) (glycosaminoglycan) serine glycosylation is found at S315 and S367. The helical transmembrane segment at 388 to 408 (AVIVGGVVGALFAAFLVTLLI) threads the bilayer. A phosphotyrosine mark is found at Y409, Y419, Y431, and Y441. At 409-442 (YRMKKKDEGSYTLEEPKQASVTYQKPDKQEEFYA) the chain is on the cytoplasmic side. Residues 419–442 (YTLEEPKQASVTYQKPDKQEEFYA) form a disordered region. Residues 433–442 (KPDKQEEFYA) show a composition bias toward basic and acidic residues.

The protein belongs to the syndecan proteoglycan family. Interacts with TIAM1. Interacts (via heparan sulfate chains) with PTN; this interaction mediates the neurite outgrowth-promoting signal from PTN to the cytoskeleton of growing neurites; this interaction mediates osteoblast recruitment. Interacts with MDK; this interaction induces SDC3 clustering; this interaction induces neuronal cell adhesion and neurite outgrowth. O-glycosylated within the Thr/Ser-rich region which could interact with lectin domains on other molecules. High levels in neonatal brain, heart, and Schwann cells, barely detectable in neonatal or adult liver, or adult brain.

Its subcellular location is the cell membrane. Its function is as follows. Cell surface proteoglycan that may bear heparan sulfate. May have a role in the organization of cell shape by affecting the actin cytoskeleton, possibly by transferring signals from the cell surface in a sugar-dependent mechanism. In Rattus norvegicus (Rat), this protein is Syndecan-3 (Sdc3).